The sequence spans 39 residues: RapF inhibitor (39 aa).

Residues M1–A34 constitute a propeptide that is removed on maturation.

Belongs to the Phr family. As to quaternary structure, interacts with RapF and inhibits its interaction with ComA. In terms of processing, contains a predicted signal peptide cleavage site in the N-terminal region, however the propeptide is probably subject to only one processing event, at the N-terminal end of the mature peptide.

It localises to the secreted. Its subcellular location is the cytoplasm. Functionally, signaling molecule involved in the regulation of genetic competence development. Secreted during production, but the mature peptide acts intracellularly, indicating that it needs to be imported into the cell to function. Stimulates expression of the genes controlled by ComA, a transcriptional factor that regulates the development of genetic competence. Acts by inhibiting RapF, which regulates the activity of ComA. This Bacillus subtilis (strain 168) protein is RapF inhibitor (phrF).